The following is a 999-amino-acid chain: MVGDARPSGVRAGGCRGAVGSRTSSRALRPPLPPLSSLFVLFLAAPCAWAAGYKTCPKVKPDMLNVHLVPHTHDDVGWLKTVDQYFYGIYNNIQPAGVQYILDSVISSLLANPTRRFIYVEIAFFSRWWRQQTNATQKIVRELVRQGRLEFANGGWVMNDEATTHYGAIIDQMTLGLRFLEETFGSDGRPRVAWHIDPFGHSREQASLFAQMGFDGFFFGRLDYQDKKVRKKTLQMEQVWRASTSLKPPTADLFTSVLPNMYNPPEGLCWDMLCADKPVVEDTRSPEYNAKELVRYFLKLATDQGKLYRTKHTVMTMGSDFQYENANTWFKNLDKLIQLVNAQQRANGIRVNVLYSTPACYLWELNKANLSWSVKKDDFFPYADGPYMFWTGYFSSRPALKRYERLSYNFLQVCNQLEALAGPAANVGPYGSGDSAPLNEAMAVLQHHDAVSGTSRQHVANDYARQLSEGWRPCEVLMSNALAHLSGLKEDFAFCRKLNISICPLTQTAERFQVIVYNPLGRKVDWMVRLPVSKHVYLVKDPGGKIVPSDVVTIPSSDSQELLFSALVPAVGFSIYSVSQMPNQRPQKSWSRDLVIQNEYLRARFDPNTGLLMELENLEQNLLLPVRQAFYWYNASTGNNLSSQASGAYIFRPNQNKPLFVSHWAQTHLVKASLVQEVHQNFSAWCSQVVRLYPRQRHLELEWTVGPIPVGDGWGKEVISRFDTALATRGLFYTDSNGREILERRRNYRPTWKLNQTEPVAGNYYPVNSRIYITDGNMQLTVLTDRSQGGSSLRDGSLELMVHRRLLKDDARGVGEPLNKEGSGLWVRGRHLVLLDKKETAAARHRLQAEMEVLAPQVVLAQGGGARYRLEKAPRTQFSGLRRELPPSVRLLTLARWGPETLLLRLEHQFAVGEDSGRNLSSPVTLDLTNLFSAFTITNLRETTLAANQLLAYASRLQWTTDTGPTPHPSPSRPVSATITLQPMEIRTFLASVQWEEDG.

The tract at residues 1 to 25 is disordered; it reads MVGDARPSGVRAGGCRGAVGSRTSS. An N-terminal signal peptide occupies residues 1–50; the sequence is MVGDARPSGVRAGGCRGAVGSRTSSRALRPPLPPLSSLFVLFLAAPCAWA. Residues H73 and D75 each coordinate Zn(2+). N-linked (GlcNAc...) asparagine glycosylation occurs at N134. D197 contributes to the Zn(2+) binding site. The active-site Nucleophile is D197. C269 and C274 form a disulfide bridge. An N-linked (GlcNAc...) asparagine glycan is attached at N369. H448 contacts Zn(2+). The cysteines at positions 495 and 503 are disulfide-linked. N-linked (GlcNAc...) asparagine glycosylation is present at N499. Residues 591–621 constitute a propeptide that is removed on maturation; that stretch reads SRDLVIQNEYLRARFDPNTGLLMELENLEQN. N-linked (GlcNAc...) asparagine glycosylation is found at N634, N640, N681, N755, and N919.

This sequence belongs to the glycosyl hydrolase 38 family. Homodimer. Zn(2+) serves as cofactor. Processed into 5 peptides of 35/38 kDa (A), 11/13 kDa (B) and 22 kDa (C), 38 kDa (D) and 13/15 kDa (E). The A, B and C peptides are disulfide-linked into a 67 kDa complex. Post-translationally, heavily glycosylated. Some sugar chains are of the high-mannose type.

It is found in the lysosome. It catalyses the reaction Hydrolysis of terminal, non-reducing alpha-D-mannose residues in alpha-D-mannosides.. Necessary for the catabolism of N-linked carbohydrates released during glycoprotein turnover. The protein is Lysosomal alpha-mannosidase (MAN2B1) of Bos taurus (Bovine).